A 33-amino-acid chain; its full sequence is ECKGFGKSCVPGKNECCSGLTCSNKHKWCKVLL.

3 disulfide bridges follow: Cys-2–Cys-17, Cys-9–Cys-22, and Cys-16–Cys-29. Leu-33 carries the post-translational modification Leucine amide.

It belongs to the neurotoxin 10 (Hwtx-1) family. 14 (Hntx-1) subfamily. In terms of assembly, monomer. As to expression, expressed by the venom gland.

It is found in the secreted. Potently and reversibly inhibits some human voltage-gated sodium channels (Nav1.1/SCN1A (IC(50)=72.0 nM), Nav1.2/SCN2A (IC(50)=75.5 nM), Nav1.6/SCN8A (IC(50)=115.0 nM), Nav1.7/SCN9A (IC(50)=52.7-129.5 nM), Nav1.3/SCN3A (IC(50)=306.6 nM)). The hNav1.7/SCN9A channel inhibition occurs without any change in steady-state inactivation- and conductance-voltage relationships. On adult mouse DRG neurons, this toxin is approximately 1000-fold more efficient to inhibit tetrodotoxin (TTX)-sensitive than TTX-resistant sodium currents. In vivo, this toxin exhibits analgesic effects in mice pain models. In Omothymus schioedtei (Malaysian earth tiger tarantula), this protein is Mu-theraphotoxin-Os1a.